Here is a 1402-residue protein sequence, read N- to C-terminus: Transcription factor SPT20 homolog (1402 aa).

Disordered regions lie at residues 1 to 29 (MNGNSKVHTEENKNEHQQEGKGGEQEQEQ), 60 to 107 (VNSL…LDTD), 114 to 133 (NNDSSNNTTTTTIPRQSSSS), 177 to 206 (QTTLPTNNNNNNNNNNNNNNNNNNNNNNIL), 786 to 817 (APSTSTSSSSSSGGTTTTTTATGTTPTTPTPV), 1136 to 1174 (PQQIQTQPLQQPPNQMAQSMISPQSTPSTSPSPQQQYQT), and 1199 to 1250 (QPLQ…PPQI). The segment covering 7–29 (VHTEENKNEHQQEGKGGEQEQEQ) has biased composition (basic and acidic residues). The segment covering 60-72 (VNSLSEPTPNEQQ) has biased composition (polar residues). The span at 73–102 (NNNNNNNSNGNGNGNDETTSSKTTTIINSN) shows a compositional bias: low complexity. Composition is skewed to low complexity over residues 183–204 (NNNNNNNNNNNNNNNNNNNNNN), 786–812 (APSTSTSSSSSSGGTTTTTTATGTTPT), 1136–1150 (PQQIQTQPLQQPPNQ), 1157–1174 (SPQSTPSTSPSPQQQYQT), 1199–1218 (QPLQQPQPQPQQQQQQQQQQ), and 1226–1250 (PQQFAQHLQQQQMQRPQAQLQPPQI).

The protein belongs to the SPT20 family.

In Dictyostelium discoideum (Social amoeba), this protein is Transcription factor SPT20 homolog.